We begin with the raw amino-acid sequence, 143 residues long: Methylglyoxal synthase (143 aa).

In terms of domain architecture, MGS-like spans 1-143 (MTVKKIALVA…DYEAYRNRII (143 aa)). Substrate-binding positions include His11, Lys15, 37–40 (TGST), and 57–58 (SG). Asp63 serves as the catalytic Proton donor/acceptor. His90 serves as a coordination point for substrate.

It belongs to the methylglyoxal synthase family.

The catalysed reaction is dihydroxyacetone phosphate = methylglyoxal + phosphate. Catalyzes the formation of methylglyoxal from dihydroxyacetone phosphate. In Coxiella burnetii (strain Dugway 5J108-111), this protein is Methylglyoxal synthase.